Consider the following 2385-residue polypeptide: Neuron navigator 3 (2385 aa).

Residues 17–38 are disordered; that stretch reads SKPVHTALPIPNLGTTGSQHCS. Residues 29–38 show a composition bias toward polar residues; the sequence is LGTTGSQHCS. The Calponin-homology (CH) domain maps to 77 to 184; sequence KEDSKIYTDW…LFFSLSRYKQ (108 aa). Positions 203-625 are disordered; the sequence is VTHASPPSEA…LPQQQQHSHP (423 aa). Composition is skewed to polar residues over residues 210 to 243, 258 to 279, and 297 to 316; these read SEAS…TSQK, GSSS…FNSI, and KGPQ…STAG. The segment covering 318–329 has biased composition (low complexity); sequence PPASAIPSPSAS. The span at 335–352 shows a compositional bias: polar residues; the sequence is KSMNVKHSATSTMLTVKQ. 2 stretches are compositionally biased toward low complexity: residues 353-363 and 427-439; these read SSTATSPTPSS and NSGL…TNSS. The span at 465–491 shows a compositional bias: basic and acidic residues; it reads PKEKEEKNRDKNKVCTEKPVKEEKDQV. Residues 521–535 show a composition bias toward low complexity; sequence IPSSSGIPKPGSKVP. 3 stretches are compositionally biased toward polar residues: residues 537–548, 557–567, and 591–625; these read VKQTISPGSTAS, TKGSPSQSLSK, and ASPS…HSHP. Positions 679 to 707 form a coiled coil; sequence ETRRMRTVKNIADLRQNLEETMSSLRGTQ. 6 disordered regions span residues 877–1312, 1351–1370, 1410–1468, 1650–1778, 1850–1881, and 2360–2385; these read ADSW…SPLF, SSSS…TSLH, LSES…SAMS, GALN…KRQN, DRLK…SRQS, and SSTQ…ESTL. Low complexity predominate over residues 882–895; sequence DSSSVSSGLSDTLD. The segment covering 896–925 has biased composition (polar residues); it reads NISTDDLNTTSSVSSYSNITVPSRKNTQLR. Basic and acidic residues predominate over residues 942 to 959; that stretch reads EELKKPEEDFDSHGDAGG. Residues 979-988 show a composition bias toward polar residues; sequence ASLSVSQTGS. Residues 1014 to 1026 are compositionally biased toward basic and acidic residues; it reads GKTDDAKASEKGK. Low complexity-rich tracts occupy residues 1074–1092 and 1157–1170; these read GSSA…GSAT and SSTS…SSKS. The segment covering 1187-1196 has biased composition (polar residues); that stretch reads GRSSPVTVNQ. 2 stretches are compositionally biased toward low complexity: residues 1206–1226 and 1253–1263; these read VSDS…TSAS and GAKAGGKSASA. Residues 1264 to 1289 show a composition bias toward polar residues; sequence PNTEGVKSSSVMPSPSTTLARQGSLE. The segment covering 1296-1305 has biased composition (gly residues); the sequence is GSMGSAGGLS. Over residues 1436-1445 the composition is skewed to basic and acidic residues; the sequence is NQEEGKEWLR. Residues 1446 to 1462 are compositionally biased toward polar residues; sequence SHSTGGLQDTGNQSPLV. Serine 1459 and serine 1463 each carry phosphoserine. Residues 1562–1653 adopt a coiled-coil conformation; the sequence is AEEKAHSEQI…AQAAIQGALN (92 aa). Residues 1672–1689 show a composition bias toward low complexity; that stretch reads SVSSINSATSHSSIGSGN. The span at 1701 to 1714 shows a compositional bias: polar residues; the sequence is WVNSRGSELRSSFK. A coiled-coil region spans residues 1794-1861; it reads EAEAEIILQL…LKAETGNTAK (68 aa). A compositionally biased stretch (low complexity) spans 1867–1881; sequence SESSSSTSSSSSRQS.

Belongs to the Nav/unc-53 family. In terms of tissue distribution, highly expressed in brain. Expressed at low levels in heart and placenta. Present in activated T-cells but not in resting T-cells (at protein level). Down-regulated in primary neuroblastoma.

Its subcellular location is the nucleus outer membrane. Its function is as follows. Plays a role in cell migration. May be involved in neuron regeneration. May regulate IL2 production by T-cells. This is Neuron navigator 3 (NAV3) from Homo sapiens (Human).